The sequence spans 372 residues: Glutamate 5-kinase (372 aa).

Lys-14 lines the ATP pocket. Substrate is bound by residues Ser-54, Asp-141, and Asn-153. 173–174 contacts ATP; the sequence is TD. Residues 280-358 form the PUA domain; that stretch reads RGHVVIDAGA…GEIETVLGYM (79 aa).

This sequence belongs to the glutamate 5-kinase family.

It is found in the cytoplasm. The catalysed reaction is L-glutamate + ATP = L-glutamyl 5-phosphate + ADP. It participates in amino-acid biosynthesis; L-proline biosynthesis; L-glutamate 5-semialdehyde from L-glutamate: step 1/2. In terms of biological role, catalyzes the transfer of a phosphate group to glutamate to form L-glutamate 5-phosphate. This Burkholderia ambifaria (strain ATCC BAA-244 / DSM 16087 / CCUG 44356 / LMG 19182 / AMMD) (Burkholderia cepacia (strain AMMD)) protein is Glutamate 5-kinase.